Here is a 902-residue protein sequence, read N- to C-terminus: Translation initiation factor IF-2 (902 aa).

The span at 137 to 177 (NLDEQQRLAESDRARDEAIQRKRDEEQAAKDRVEAERKAAE) shows a compositional bias: basic and acidic residues. Disordered stretches follow at residues 137-248 (NLDE…SHVM) and 266-314 (HLSA…ERPT). Low complexity-rich tracts occupy residues 178-229 (EAAA…ATPA) and 279-291 (RGKPTGRPGSSSS). Residues 401-570 (SRPPVVTIMG…SLQAEVLELK (170 aa)) form the tr-type G domain. Residues 410–417 (GHVDHGKT) form a G1 region. GTP is bound at residue 410-417 (GHVDHGKT). The tract at residues 435-439 (GITQH) is G2. Residues 456–459 (DTPG) are G3. GTP contacts are provided by residues 456 to 460 (DTPGH) and 510 to 513 (NKID). Residues 510–513 (NKID) form a G4 region. The interval 546-548 (SAK) is G5.

Belongs to the TRAFAC class translation factor GTPase superfamily. Classic translation factor GTPase family. IF-2 subfamily.

The protein resides in the cytoplasm. One of the essential components for the initiation of protein synthesis. Protects formylmethionyl-tRNA from spontaneous hydrolysis and promotes its binding to the 30S ribosomal subunits. Also involved in the hydrolysis of GTP during the formation of the 70S ribosomal complex. This Xanthomonas campestris pv. campestris (strain 8004) protein is Translation initiation factor IF-2.